A 136-amino-acid polypeptide reads, in one-letter code: Urease subunit beta (136 aa).

This sequence belongs to the urease beta subunit family. Heterotrimer of UreA (gamma), UreB (beta) and UreC (alpha) subunits. Three heterotrimers associate to form the active enzyme.

The protein resides in the cytoplasm. It catalyses the reaction urea + 2 H2O + H(+) = hydrogencarbonate + 2 NH4(+). It functions in the pathway nitrogen metabolism; urea degradation; CO(2) and NH(3) from urea (urease route): step 1/1. This Staphylococcus aureus (strain Mu3 / ATCC 700698) protein is Urease subunit beta.